The chain runs to 445 residues: Sporulation protein YkvU (445 aa).

Helical transmembrane passes span 7–29 (GIIL…NMIL), 39–61 (GLYM…ELPI), 82–104 (AFRM…LPFI), 109–131 (TYHP…TSIA), 144–166 (IAIA…FQWY), 172–194 (MAVL…YLYS), 237–259 (VNAI…GTAA), 269–291 (VAVT…MIPS), 312–334 (IFIT…GPLT), 349–371 (LLWP…IGMG), 376–395 (AFYH…YVLG), and 400–422 (LQML…LHYA).

The protein resides in the forespore membrane. This chain is Sporulation protein YkvU (ykvU), found in Bacillus subtilis (strain 168).